A 509-amino-acid chain; its full sequence is Cytochrome P450 monooxygenase aba1 (509 aa).

The N-terminal stretch at 1-31 (MSNSILNLGSFACLLSLGSIVLWYTISAVLA) is a signal peptide. Asn-402 carries an N-linked (GlcNAc...) asparagine glycan. Position 451 (Cys-451) interacts with heme. Asn-462 is a glycosylation site (N-linked (GlcNAc...) asparagine).

This sequence belongs to the cytochrome P450 family. It depends on heme as a cofactor.

The protein operates within hormone biosynthesis. Functionally, cytochrome P450 monooxygenase; part of the gene cluster that mediates the biosynthesis of abscisic acid (ABA), a phytohormone that acts antagonistically toward salicylic acid (SA), jasmonic acid (JA) and ethylene (ETH) signaling, to impede plant defense responses. The first step of the pathway catalyzes the reaction from farnesyl diphosphate to alpha-ionylideneethane performed by the alpha-ionylideneethane synthase aba3 via a three-step reaction mechanism involving 2 neutral intermediates, beta-farnesene and allofarnesene. The cytochrome P450 monooxygenase aba1 might then be involved in the conversion of alpha-ionylideneethane to alpha-ionylideneacetic acid. Alpha-ionylideneacetic acid is further converted to abscisic acid in 2 steps involving the cytochrome P450 monooxygenase aba2 and the short-chain dehydrogenase/reductase aba4, via the intermediates 1'-deoxy-ABA or 1',4'-trans-diol-ABA, depending on the order of action of these 2 enzymes. Aba2 is responsible for the hydroxylation of carbon atom C-1' and aba4 might be involved in the oxidation of the C-4' carbon atom. In Botryotinia fuckeliana (strain B05.10) (Noble rot fungus), this protein is Cytochrome P450 monooxygenase aba1 (aba1).